A 925-amino-acid polypeptide reads, in one-letter code: Alanine--tRNA ligase (925 aa).

Zn(2+)-binding residues include H611, H615, C714, and H718.

The protein belongs to the class-II aminoacyl-tRNA synthetase family. The cofactor is Zn(2+).

It localises to the cytoplasm. It catalyses the reaction tRNA(Ala) + L-alanine + ATP = L-alanyl-tRNA(Ala) + AMP + diphosphate. Functionally, catalyzes the attachment of alanine to tRNA(Ala) in a two-step reaction: alanine is first activated by ATP to form Ala-AMP and then transferred to the acceptor end of tRNA(Ala). Also edits incorrectly charged Ser-tRNA(Ala) and Gly-tRNA(Ala) via its editing domain. The polypeptide is Alanine--tRNA ligase (Methanosarcina acetivorans (strain ATCC 35395 / DSM 2834 / JCM 12185 / C2A)).